Here is a 112-residue protein sequence, read N- to C-terminus: Large ribosomal subunit protein uL22 (112 aa).

Belongs to the universal ribosomal protein uL22 family. In terms of assembly, part of the 50S ribosomal subunit.

This protein binds specifically to 23S rRNA; its binding is stimulated by other ribosomal proteins, e.g. L4, L17, and L20. It is important during the early stages of 50S assembly. It makes multiple contacts with different domains of the 23S rRNA in the assembled 50S subunit and ribosome. In terms of biological role, the globular domain of the protein is located near the polypeptide exit tunnel on the outside of the subunit, while an extended beta-hairpin is found that lines the wall of the exit tunnel in the center of the 70S ribosome. The protein is Large ribosomal subunit protein uL22 of Finegoldia magna (strain ATCC 29328 / DSM 20472 / WAL 2508) (Peptostreptococcus magnus).